Here is a 363-residue protein sequence, read N- to C-terminus: Putative aryl-alcohol dehydrogenase AAD3 (363 aa).

Belongs to the aldo/keto reductase family. Aldo/keto reductase 2 subfamily.

The chain is Putative aryl-alcohol dehydrogenase AAD3 (AAD3) from Saccharomyces cerevisiae (strain ATCC 204508 / S288c) (Baker's yeast).